The following is a 344-amino-acid chain: Holliday junction branch migration complex subunit RuvB (344 aa).

The segment at 1–182 is large ATPase domain (RuvB-L); that stretch reads MRIEALNTAP…FGINSRLDYY (182 aa). ATP contacts are provided by residues Ile-21, Arg-22, Gly-63, Lys-66, Thr-67, Thr-68, 129–131, Arg-172, Tyr-182, and Arg-219; that span reads EDY. Thr-67 contributes to the Mg(2+) binding site. The interval 183 to 253 is small ATPAse domain (RuvB-S); it reads NPELLQSIII…VARRTLESLE (71 aa). Residues 256–344 form a head domain (RuvB-H) region; the sequence is EGGLDDMDKK…GSLFDTAEDG (89 aa). Residues Arg-311 and Arg-316 each contribute to the DNA site.

This sequence belongs to the RuvB family. Homohexamer. Forms an RuvA(8)-RuvB(12)-Holliday junction (HJ) complex. HJ DNA is sandwiched between 2 RuvA tetramers; dsDNA enters through RuvA and exits via RuvB. An RuvB hexamer assembles on each DNA strand where it exits the tetramer. Each RuvB hexamer is contacted by two RuvA subunits (via domain III) on 2 adjacent RuvB subunits; this complex drives branch migration. In the full resolvosome a probable DNA-RuvA(4)-RuvB(12)-RuvC(2) complex forms which resolves the HJ.

It localises to the cytoplasm. It carries out the reaction ATP + H2O = ADP + phosphate + H(+). Functionally, the RuvA-RuvB-RuvC complex processes Holliday junction (HJ) DNA during genetic recombination and DNA repair, while the RuvA-RuvB complex plays an important role in the rescue of blocked DNA replication forks via replication fork reversal (RFR). RuvA specifically binds to HJ cruciform DNA, conferring on it an open structure. The RuvB hexamer acts as an ATP-dependent pump, pulling dsDNA into and through the RuvAB complex. RuvB forms 2 homohexamers on either side of HJ DNA bound by 1 or 2 RuvA tetramers; 4 subunits per hexamer contact DNA at a time. Coordinated motions by a converter formed by DNA-disengaged RuvB subunits stimulates ATP hydrolysis and nucleotide exchange. Immobilization of the converter enables RuvB to convert the ATP-contained energy into a lever motion, pulling 2 nucleotides of DNA out of the RuvA tetramer per ATP hydrolyzed, thus driving DNA branch migration. The RuvB motors rotate together with the DNA substrate, which together with the progressing nucleotide cycle form the mechanistic basis for DNA recombination by continuous HJ branch migration. Branch migration allows RuvC to scan DNA until it finds its consensus sequence, where it cleaves and resolves cruciform DNA. This is Holliday junction branch migration complex subunit RuvB from Chlorobaculum tepidum (strain ATCC 49652 / DSM 12025 / NBRC 103806 / TLS) (Chlorobium tepidum).